We begin with the raw amino-acid sequence, 474 residues long: C6 finger domain transcription factor aclZ (474 aa).

Positions 42-69 (CNQCHAAKVRCSGERTGCDRCNNLQYQC) form a DNA-binding region, zn(2)-C6 fungal-type. Disordered regions lie at residues 85-148 (RGNK…SHSA) and 177-206 (MSSDQDPSRSRGHSLQAPSHSGHSIADSHT). Residues 90–105 (VRTTTEALQRPATAST) show a composition bias toward polar residues. Residues 117–138 (TDQRSENDPLSRSDFGEQDAAH) show a composition bias toward basic and acidic residues.

The protein resides in the nucleus. Functionally, transcription factor that specifically regulates the gene cluster that mediates the biosynthesis of aspirochlorine (or antibiotic A30641), an unusual halogenated spiro compound with distinctive antifungal properties due to selective inhibition of protein biosynthesis, and which is also active against bacteria, viruses, and murine tumor cells. The chain is C6 finger domain transcription factor aclZ from Aspergillus oryzae (strain ATCC 42149 / RIB 40) (Yellow koji mold).